The following is a 344-amino-acid chain: MKVAIIGATGYSGAELFRLLQAHPHVDRCDVYLSSQDGVHLSESFPHVGAVDGAVLHKLDIEALAKYDAVFFATPPGVSGEWAPALVDRGVKVIDLSGDFRLKDGAVYERWYGREAAPAAYLKRAVYGLTEWNRDAVREAELLSNPGCYPTATLLGLAPLVKERLIEEDSIIVDAKSGVSGAGRKAGLGTHFSEVNENVKIYKVNAHQHIPEIEQMLGTWNGAMKPITFSTHLIPMTRGIMSTIYAKVKQPFSLNDLIDLYKTSYEDASFVRIRQPGQFPATKEVYGSNYCDIGLAYDERTGRVTVVSVIDNLMKGAAGQAVQNFNLMMGWDEVEGLCFLPTYP.

Residue Cys148 is part of the active site.

This sequence belongs to the NAGSA dehydrogenase family. Type 1 subfamily.

The protein resides in the cytoplasm. The enzyme catalyses N-acetyl-L-glutamate 5-semialdehyde + phosphate + NADP(+) = N-acetyl-L-glutamyl 5-phosphate + NADPH + H(+). The protein operates within amino-acid biosynthesis; L-arginine biosynthesis; N(2)-acetyl-L-ornithine from L-glutamate: step 3/4. Functionally, catalyzes the NADPH-dependent reduction of N-acetyl-5-glutamyl phosphate to yield N-acetyl-L-glutamate 5-semialdehyde. The polypeptide is N-acetyl-gamma-glutamyl-phosphate reductase (Geobacillus thermodenitrificans (strain NG80-2)).